Consider the following 193-residue polypeptide: Ion-translocating oxidoreductase complex subunit A (193 aa).

The next 6 membrane-spanning stretches (helical) occupy residues 5–25 (LLLL…FLGL), 39–59 (IGMG…SYLV), 67–87 (LGIE…VVQF), 102–122 (VLGI…VALL), 134–154 (IIYG…FSAM), and 171–191 (SIAM…TGLV).

The protein belongs to the NqrDE/RnfAE family. As to quaternary structure, the complex is composed of six subunits: RnfA, RnfB, RnfC, RnfD, RnfE and RnfG.

It is found in the cell inner membrane. In terms of biological role, part of a membrane-bound complex that couples electron transfer with translocation of ions across the membrane. The protein is Ion-translocating oxidoreductase complex subunit A of Aliivibrio fischeri (strain ATCC 700601 / ES114) (Vibrio fischeri).